We begin with the raw amino-acid sequence, 240 residues long: Small ribosomal subunit protein uS2 (240 aa).

The protein belongs to the universal ribosomal protein uS2 family. Component of the small ribosomal subunit. Mature ribosomes consist of a small (40S) and a large (60S) subunit. The 40S subunit contains about 33 different proteins and 1 molecule of RNA (18S). The 60S subunit contains about 49 different proteins and 3 molecules of RNA (25S, 5.8S and 5S). Interacts with RPS21.

It is found in the cytoplasm. Required for the assembly and/or stability of the 40S ribosomal subunit. Required for the processing of the 20S rRNA-precursor to mature 18S rRNA in a late step of the maturation of 40S ribosomal subunits. The polypeptide is Small ribosomal subunit protein uS2 (Enterocytozoon bieneusi (strain H348) (Microsporidian parasite)).